A 342-amino-acid chain; its full sequence is Holliday junction branch migration complex subunit RuvB (342 aa).

Positions 1 to 179 (MTNILSPEKS…FGIPMRLNFY (179 aa)) are large ATPase domain (RuvB-L). Residues Ile-18, Arg-19, Gly-60, Lys-63, Thr-64, Thr-65, 126–128 (EDF), Arg-169, Tyr-179, and Arg-216 contribute to the ATP site. Thr-64 contacts Mg(2+). The segment at 180 to 250 (NTEELKQVLN…ICDFGLKRLT (71 aa)) is small ATPAse domain (RuvB-S). The segment at 253-342 (SIGLDSNDYR…HQFNILNENE (90 aa)) is head domain (RuvB-H). Positions 289, 308, and 313 each coordinate DNA.

This sequence belongs to the RuvB family. Homohexamer. Forms an RuvA(8)-RuvB(12)-Holliday junction (HJ) complex. HJ DNA is sandwiched between 2 RuvA tetramers; dsDNA enters through RuvA and exits via RuvB. An RuvB hexamer assembles on each DNA strand where it exits the tetramer. Each RuvB hexamer is contacted by two RuvA subunits (via domain III) on 2 adjacent RuvB subunits; this complex drives branch migration. In the full resolvosome a probable DNA-RuvA(4)-RuvB(12)-RuvC(2) complex forms which resolves the HJ.

It is found in the cytoplasm. It carries out the reaction ATP + H2O = ADP + phosphate + H(+). The RuvA-RuvB-RuvC complex processes Holliday junction (HJ) DNA during genetic recombination and DNA repair, while the RuvA-RuvB complex plays an important role in the rescue of blocked DNA replication forks via replication fork reversal (RFR). RuvA specifically binds to HJ cruciform DNA, conferring on it an open structure. The RuvB hexamer acts as an ATP-dependent pump, pulling dsDNA into and through the RuvAB complex. RuvB forms 2 homohexamers on either side of HJ DNA bound by 1 or 2 RuvA tetramers; 4 subunits per hexamer contact DNA at a time. Coordinated motions by a converter formed by DNA-disengaged RuvB subunits stimulates ATP hydrolysis and nucleotide exchange. Immobilization of the converter enables RuvB to convert the ATP-contained energy into a lever motion, pulling 2 nucleotides of DNA out of the RuvA tetramer per ATP hydrolyzed, thus driving DNA branch migration. The RuvB motors rotate together with the DNA substrate, which together with the progressing nucleotide cycle form the mechanistic basis for DNA recombination by continuous HJ branch migration. Branch migration allows RuvC to scan DNA until it finds its consensus sequence, where it cleaves and resolves cruciform DNA. This chain is Holliday junction branch migration complex subunit RuvB, found in Rickettsia typhi (strain ATCC VR-144 / Wilmington).